The sequence spans 273 residues: uncharacterized protein (273 aa).

The N-terminal stretch at 1 to 21 (MKILRWLFALVMLIATTEAMA) is a signal peptide.

The protein to S.typhimurium YadU.

Its function is as follows. Part of the yfcOPQRSUV fimbrial operon. Could contribute to adhesion to various surfaces in specific environmental niches. Increases adhesion to eukaryotic T24 bladder epithelial cells in the absence of fim genes. This is an uncharacterized protein from Escherichia coli (strain K12).